Consider the following 247-residue polypeptide: Trypsin-2 (247 aa).

The signal sequence occupies residues 1-15 (MNLLLILTFVAAAVA). A propeptide spans 16–23 (APFDDDDK) (activation peptide). Positions 24 to 244 (IVGGYICEEN…YVDWIKDTIA (221 aa)) constitute a Peptidase S1 domain. Intrachain disulfides connect Cys-30–Cys-160, Cys-48–Cys-64, Cys-171–Cys-185, and Cys-196–Cys-220. Catalysis depends on His-63, which acts as the Charge relay system. Ca(2+) is bound by residues Glu-75, Asn-77, Val-80, and Glu-85. The active-site Charge relay system is the Asp-107. At Tyr-154 the chain carries Sulfotyrosine. Ser-200 serves as the catalytic Charge relay system.

The protein belongs to the peptidase S1 family. Ca(2+) serves as cofactor. In terms of processing, sulfated on tyrosine. Post-translationally, sulfation at Tyr-154 increases selectivity towards basic versus apolar residues at the P2' position of inhibitors that bind in a substrate-like fashion. Although the increase in selectivity is relatively small, it may facilitate digestion of a broader range of dietary proteins. In terms of tissue distribution, expressed in Paneth cells, at the base of small intestinal crypts.

Its subcellular location is the secreted. It is found in the extracellular space. The catalysed reaction is Preferential cleavage: Arg-|-Xaa, Lys-|-Xaa.. In the ileum, may be involved in defensin processing, including DEFA5. The sequence is that of Trypsin-2 (PRSS2) from Homo sapiens (Human).